The sequence spans 130 residues: Small ribosomal subunit protein uS9 (130 aa).

The disordered stretch occupies residues 109-130 (RAKERKKYGLKAARRAPQFSKR). Positions 111-130 (KERKKYGLKAARRAPQFSKR) are enriched in basic residues.

Belongs to the universal ribosomal protein uS9 family.

This is Small ribosomal subunit protein uS9 from Heliobacterium modesticaldum (strain ATCC 51547 / Ice1).